The sequence spans 335 residues: MRTLAVETSCDETALAIYDDQKGVLGNVILSQAVVHSPFGGVVPELSAREHTRNILPIFDRLLKESRINLEEIDFISFTLTPGLILSLVVGVAFAKALAYEYRKPLVPVHHLEGHIYSVFLEKKVEYPFLALIISGGHTDLYLVRDFGRYDFLGGTLDDAVGEAYDKVAKMLGLGYPGGPIIDRLAKEGKKLYPLPKPLMEEGNLNFSFSGLKTAILNLLKKEKNVRKEDIAYSFQETVVEILLEKSLWAMKKTGIKRLVVVGGVSANSRLREVFKKASQEYGFELYIPHPSLSTDNALMIAYAGMERFKRGVVAPLDVNPQPNIPLEEFGRIWT.

Histidine 111 and histidine 115 together coordinate Fe cation. Substrate contacts are provided by residues 133–137 (IISGG), aspartate 166, glycine 179, aspartate 183, and asparagine 268. Aspartate 296 contacts Fe cation.

It belongs to the KAE1 / TsaD family. Fe(2+) is required as a cofactor.

The protein resides in the cytoplasm. It catalyses the reaction L-threonylcarbamoyladenylate + adenosine(37) in tRNA = N(6)-L-threonylcarbamoyladenosine(37) in tRNA + AMP + H(+). Required for the formation of a threonylcarbamoyl group on adenosine at position 37 (t(6)A37) in tRNAs that read codons beginning with adenine. Is involved in the transfer of the threonylcarbamoyl moiety of threonylcarbamoyl-AMP (TC-AMP) to the N6 group of A37, together with TsaE and TsaB. TsaD likely plays a direct catalytic role in this reaction. The chain is tRNA N6-adenosine threonylcarbamoyltransferase from Aquifex aeolicus (strain VF5).